The following is a 389-amino-acid chain: Very-long-chain 3-oxoacyl-CoA reductase (389 aa).

Residues 34-54 (IAVFLLAIGLFHVALKVVSYV) traverse the membrane as a helical segment. NADP(+) contacts are provided by Val-80, Asp-134, Asn-162, Tyr-239, Lys-243, Val-272, and Ser-274. Residue Tyr-239 is the Proton donor of the active site. Catalysis depends on Lys-243, which acts as the Lowers pKa of active site Tyr. Residues 359-389 (QAAGGVADPKNTTAAREGYATESLKNETLKH) form a disordered region.

It belongs to the short-chain dehydrogenases/reductases (SDR) family.

The protein localises to the endoplasmic reticulum membrane. The enzyme catalyses a very-long-chain (3R)-3-hydroxyacyl-CoA + NADP(+) = a very-long-chain 3-oxoacyl-CoA + NADPH + H(+). It participates in lipid metabolism; fatty acid biosynthesis. Component of the microsomal membrane bound fatty acid elongation system, which produces the 26-carbon very long-chain fatty acids (VLCFA) from palmitate. Catalyzes the reduction of the 3-ketoacyl-CoA intermediate that is formed in each cycle of fatty acid elongation. VLCFAs serve as precursors for ceramide and sphingolipids. The polypeptide is Very-long-chain 3-oxoacyl-CoA reductase (Yarrowia lipolytica (strain CLIB 122 / E 150) (Yeast)).